The primary structure comprises 264 residues: S-adenosylmethionine decarboxylase proenzyme (264 aa).

Ser112 serves as the catalytic Schiff-base intermediate with substrate; via pyruvic acid. The residue at position 112 (Ser112) is a Pyruvic acid (Ser); by autocatalysis. His117 functions as the Proton acceptor; for processing activity in the catalytic mechanism. Catalysis depends on Cys140, which acts as the Proton donor; for catalytic activity.

This sequence belongs to the prokaryotic AdoMetDC family. Type 2 subfamily. Heterooctamer of four alpha and four beta chains arranged as a tetramer of alpha/beta heterodimers. The cofactor is pyruvate. In terms of processing, is synthesized initially as an inactive proenzyme. Formation of the active enzyme involves a self-maturation process in which the active site pyruvoyl group is generated from an internal serine residue via an autocatalytic post-translational modification. Two non-identical subunits are generated from the proenzyme in this reaction, and the pyruvate is formed at the N-terminus of the alpha chain, which is derived from the carboxyl end of the proenzyme. The post-translation cleavage follows an unusual pathway, termed non-hydrolytic serinolysis, in which the side chain hydroxyl group of the serine supplies its oxygen atom to form the C-terminus of the beta chain, while the remainder of the serine residue undergoes an oxidative deamination to produce ammonia and the pyruvoyl group blocking the N-terminus of the alpha chain.

It carries out the reaction S-adenosyl-L-methionine + H(+) = S-adenosyl 3-(methylsulfanyl)propylamine + CO2. Its pathway is amine and polyamine biosynthesis; S-adenosylmethioninamine biosynthesis; S-adenosylmethioninamine from S-adenosyl-L-methionine: step 1/1. Its function is as follows. Catalyzes the decarboxylation of S-adenosylmethionine to S-adenosylmethioninamine (dcAdoMet), the propylamine donor required for the synthesis of the polyamines spermine and spermidine from the diamine putrescine. This is S-adenosylmethionine decarboxylase proenzyme from Salmonella typhi.